A 492-amino-acid chain; its full sequence is MDPYKYRPSSAYNTPFCTTNSGAPIWNNTAVMSVGERGPILLEDYQLIEKIATFTRERIPERVVHARGASAKGFFEVTHDVSDLSCADFLRAPGVQTPVIVRFSTVIHERVSPETVRDPRGFAVKFYTREGNFDLVGNNFPVFFVRDAMQFPDVIRAFKPNPKSHLQESWRFLDFCSYHPESLLSFAWFYDDVGIPINYRHMEGFGVQAYSLINKAGKARLVKFHWKPTCGVKSMLEEEAIRVGGSNHSHATQDLYESIAAGNFPEWRLYIQTIDYEDQNNYDFEPLDTTIAWPEDVVPLRPVGRLVLNKNIDNFFAENEMLAFSMSLVPGIHYSDDKMLQARSFAYADTQRHRLGPNYLQLPVNAPKCPHHNNHHEGFMNFMHRDEEVNYFPSRYDACRHAEKYPMPPNVLSGKRERCVIPKENHNFKQAGDRYRSWAPDRQERFVNRFVEALSDSKVTHEVRNIWISYWTQADRSLGQKIASRMNARPNM.

Residues histidine 65 and asparagine 138 contribute to the active site. Residue tyrosine 347 coordinates heme.

Belongs to the catalase family. In terms of assembly, homotetramer. Heme serves as cofactor. High levels in green cotyledons, mature leaf, stem and green hypocotyl.

The protein localises to the peroxisome. It carries out the reaction 2 H2O2 = O2 + 2 H2O. Occurs in almost all aerobically respiring organisms and serves to protect cells from the toxic effects of hydrogen peroxide. The protein is Catalase isozyme 2 (CAT2) of Cucurbita pepo (Vegetable marrow).